The primary structure comprises 98 residues: NADH-ubiquinone oxidoreductase chain 4L (98 aa).

The next 3 helical transmembrane spans lie at 1–21 (MSLTYMNMLLAFMISLMGLLM), 29–49 (SLLCLEGMMLSLFVMMTVTIL), and 61–81 (IILLVFAACEAALGLSLLVMV).

The protein belongs to the complex I subunit 4L family. Core subunit of respiratory chain NADH dehydrogenase (Complex I) which is composed of 45 different subunits.

It localises to the mitochondrion inner membrane. It carries out the reaction a ubiquinone + NADH + 5 H(+)(in) = a ubiquinol + NAD(+) + 4 H(+)(out). Core subunit of the mitochondrial membrane respiratory chain NADH dehydrogenase (Complex I) which catalyzes electron transfer from NADH through the respiratory chain, using ubiquinone as an electron acceptor. Part of the enzyme membrane arm which is embedded in the lipid bilayer and involved in proton translocation. In Sturnira lilium (Lesser yellow-shouldered bat), this protein is NADH-ubiquinone oxidoreductase chain 4L (MT-ND4L).